A 198-amino-acid chain; its full sequence is Imidazoleglycerol-phosphate dehydratase (198 aa).

Belongs to the imidazoleglycerol-phosphate dehydratase family.

Its subcellular location is the cytoplasm. The catalysed reaction is D-erythro-1-(imidazol-4-yl)glycerol 3-phosphate = 3-(imidazol-4-yl)-2-oxopropyl phosphate + H2O. The protein operates within amino-acid biosynthesis; L-histidine biosynthesis; L-histidine from 5-phospho-alpha-D-ribose 1-diphosphate: step 6/9. This is Imidazoleglycerol-phosphate dehydratase from Agrobacterium fabrum (strain C58 / ATCC 33970) (Agrobacterium tumefaciens (strain C58)).